The sequence spans 326 residues: Phosphate acyltransferase (326 aa).

Belongs to the PlsX family. Homodimer. Probably interacts with PlsY.

The protein localises to the cytoplasm. It carries out the reaction a fatty acyl-[ACP] + phosphate = an acyl phosphate + holo-[ACP]. It participates in lipid metabolism; phospholipid metabolism. Functionally, catalyzes the reversible formation of acyl-phosphate (acyl-PO(4)) from acyl-[acyl-carrier-protein] (acyl-ACP). This enzyme utilizes acyl-ACP as fatty acyl donor, but not acyl-CoA. In Petrotoga mobilis (strain DSM 10674 / SJ95), this protein is Phosphate acyltransferase.